The primary structure comprises 323 residues: tRNA dimethylallyltransferase (323 aa).

13-20 (GPTASGKT) provides a ligand contact to ATP. Residue 15–20 (TASGKT) participates in substrate binding. 4 interaction with substrate tRNA regions span residues 42 to 45 (DSAL), 166 to 170 (QRIQR), 251 to 256 (RCVGYR), and 284 to 291 (KRQITWLR).

It belongs to the IPP transferase family. Monomer. Requires Mg(2+) as cofactor.

The enzyme catalyses adenosine(37) in tRNA + dimethylallyl diphosphate = N(6)-dimethylallyladenosine(37) in tRNA + diphosphate. Catalyzes the transfer of a dimethylallyl group onto the adenine at position 37 in tRNAs that read codons beginning with uridine, leading to the formation of N6-(dimethylallyl)adenosine (i(6)A). This Acidovorax sp. (strain JS42) protein is tRNA dimethylallyltransferase.